A 185-amino-acid chain; its full sequence is Elongation factor P (185 aa).

It belongs to the elongation factor P family.

It localises to the cytoplasm. It functions in the pathway protein biosynthesis; polypeptide chain elongation. In terms of biological role, involved in peptide bond synthesis. Stimulates efficient translation and peptide-bond synthesis on native or reconstituted 70S ribosomes in vitro. Probably functions indirectly by altering the affinity of the ribosome for aminoacyl-tRNA, thus increasing their reactivity as acceptors for peptidyl transferase. The chain is Elongation factor P from Dictyoglomus thermophilum (strain ATCC 35947 / DSM 3960 / H-6-12).